Reading from the N-terminus, the 279-residue chain is Elongation factor Ts (279 aa).

The tract at residues 80 to 83 (TDFV) is involved in Mg(2+) ion dislocation from EF-Tu.

It belongs to the EF-Ts family.

The protein resides in the cytoplasm. In terms of biological role, associates with the EF-Tu.GDP complex and induces the exchange of GDP to GTP. It remains bound to the aminoacyl-tRNA.EF-Tu.GTP complex up to the GTP hydrolysis stage on the ribosome. The protein is Elongation factor Ts of Borreliella afzelii (strain PKo) (Borrelia afzelii).